Consider the following 95-residue polypeptide: Putative monooxygenase YcnE (95 aa).

The region spanning 2–93 (IVLQAYIKVK…APLDVVRTEL (92 aa)) is the ABM domain. S24 is subject to Phosphoserine.

Belongs to the LsrG family.

Functionally, putative monooxygenase that may contribute to the degradation of aromatic compounds. This chain is Putative monooxygenase YcnE (ycnE), found in Bacillus subtilis (strain 168).